The primary structure comprises 284 residues: Tropomyosin alpha-3 chain (284 aa).

An N-acetylmethionine modification is found at Met-1. The tract at residues 1-43 (MEAIKKKMQMLKLDKENALDRAEQAEAEQKQAEERSKQLEDEL) is disordered. Residues 1–284 (MEAIKKKMQM…DHALNDMTSI (284 aa)) are a coiled coil. The residue at position 2 (Glu-2) is an N-acetylalanine. Positions 12-40 (KLDKENALDRAEQAEAEQKQAEERSKQLE) are enriched in basic and acidic residues. Thr-53 is modified (phosphothreonine). Phosphoserine occurs at positions 61 and 87. Thr-108 bears the Phosphothreonine mark. Ser-206 and Ser-215 each carry phosphoserine. Leu-228 carries the N6-acetyllysine modification. Thr-252 is subject to Phosphothreonine. Phosphotyrosine is present on Tyr-261. The residue at position 271 (Ser-271) is a Phosphoserine. Position 282 is a phosphothreonine (Thr-282). Position 283 is a phosphoserine (Ser-283).

Belongs to the tropomyosin family. As to quaternary structure, homodimer. Heterodimer of an alpha (TPM1, TPM3 or TPM4) and a beta (TPM2) chain. Interacts with TMOD1. Interacts with TNNT1.

Its subcellular location is the cytoplasm. It localises to the cytoskeleton. Its function is as follows. Binds to actin filaments in muscle and non-muscle cells. Plays a central role, in association with the troponin complex, in the calcium dependent regulation of vertebrate striated muscle contraction. Smooth muscle contraction is regulated by interaction with caldesmon. In non-muscle cells is implicated in stabilizing cytoskeleton actin filaments. This is Tropomyosin alpha-3 chain (TPM3) from Bos taurus (Bovine).